A 354-amino-acid chain; its full sequence is MTALKNDRFLRALLKQPVDVTPVWMMRQAGRYLPEYRASRASAGDFMSLCKNPQFACEVTLQPLDRYPLDAAILFSDILTIPDAMGLGLYFETGEGPRFKKTVSTLADIEALPIPDAQQDLGYVMDAVSTIRRELNGRVPLIGFAGSPWTLATYMVEGGSSKDFRKSKAMLYDNPQAMHLLLDKLAQSVTSYLNGQILAGAQAVQIFDSWGGSLSSAAYQEFSLAYMRKIVNGLIRENDGRKVPVIVFTKGGGLWLESIAEIGADTLGLDWTCDIGEARQRVGNKVSLQGNMDPTVLYARPEAIRQEVARILASYGSGTGHVFNLGHGITPEVDPANAGAFINAVHELSAQYHQ.

Substrate contacts are provided by residues 27–31 (RQAGR), Phe46, Asp77, Tyr154, Ser209, and His327.

This sequence belongs to the uroporphyrinogen decarboxylase family. As to quaternary structure, homodimer.

The protein resides in the cytoplasm. It carries out the reaction uroporphyrinogen III + 4 H(+) = coproporphyrinogen III + 4 CO2. The protein operates within porphyrin-containing compound metabolism; protoporphyrin-IX biosynthesis; coproporphyrinogen-III from 5-aminolevulinate: step 4/4. Functionally, catalyzes the decarboxylation of four acetate groups of uroporphyrinogen-III to yield coproporphyrinogen-III. The protein is Uroporphyrinogen decarboxylase of Pseudomonas syringae pv. tomato (strain ATCC BAA-871 / DC3000).